A 397-amino-acid polypeptide reads, in one-letter code: Cathepsin E-A (397 aa).

The N-terminal stretch at 1 to 16 (MRQILVLLLFATLVYG) is a signal peptide. Positions 17–52 (LIRVPLKRQKSIRKTLKEKGKLSHIWTQQGIDMVQY) are cleaved as a propeptide — activation peptide. A Peptidase A1 domain is found at 74-385 (YFGEISVGTP…DRGNNRVGLA (312 aa)). A glycan (N-linked (GlcNAc...) asparagine) is linked at N86. The active site involves D92. A disulfide bridge connects residues C105 and C110. N-linked (GlcNAc...) asparagine glycosylation is present at N130. C268 and C272 are disulfide-bonded. D277 is a catalytic residue. C310 and C344 are joined by a disulfide.

It belongs to the peptidase A1 family. As to quaternary structure, homodimer; disulfide-linked. In terms of processing, glycosylated. Contains high mannose-type oligosaccharide. As to expression, expressed predominantly in the larval foregut and the anterior and posterior adult stomach.

It localises to the endosome. The catalysed reaction is Similar to cathepsin D, but slightly broader specificity.. In terms of biological role, may have a role in immune function. Probably involved in the processing of antigenic peptides during MHC class II-mediated antigen presentation. This chain is Cathepsin E-A (ctse-a), found in Xenopus laevis (African clawed frog).